Consider the following 63-residue polypeptide: Cytochrome b-c1 complex subunit 9 (63 aa).

Residues 2–21 lie on the Mitochondrial matrix side of the membrane; the sequence is AAATLTSKLYSLLFRRTSTF. The chain crosses the membrane as a helical span at residues 22 to 47; that stretch reads ALTIIVGVMFFERAFDQGADAIYDHI. At 48 to 63 the chain is on the mitochondrial intermembrane side; it reads NEGKLWKHIKHKYENK.

The protein belongs to the UQCR10/QCR9 family. In terms of assembly, component of the ubiquinol-cytochrome c oxidoreductase (cytochrome b-c1 complex, complex III, CIII), a multisubunit enzyme composed of 11 subunits. The complex is composed of 3 respiratory subunits cytochrome b, cytochrome c1 and Rieske protein UQCRFS1, 2 core protein subunits UQCRC1/QCR1 and UQCRC2/QCR2, and 6 low-molecular weight protein subunits UQCRH/QCR6, UQCRB/QCR7, UQCRQ/QCR8, UQCR10/QCR9, UQCR11/QCR10 and subunit 9, the cleavage product of Rieske protein UQCRFS1. The complex exists as an obligatory dimer and forms supercomplexes (SCs) in the inner mitochondrial membrane with NADH-ubiquinone oxidoreductase (complex I, CI) and cytochrome c oxidase (complex IV, CIV), resulting in different assemblies (supercomplex SCI(1)III(2)IV(1) and megacomplex MCI(2)III(2)IV(2)). Interacts with STMP1.

It localises to the mitochondrion inner membrane. Functionally, component of the ubiquinol-cytochrome c oxidoreductase, a multisubunit transmembrane complex that is part of the mitochondrial electron transport chain which drives oxidative phosphorylation. The respiratory chain contains 3 multisubunit complexes succinate dehydrogenase (complex II, CII), ubiquinol-cytochrome c oxidoreductase (cytochrome b-c1 complex, complex III, CIII) and cytochrome c oxidase (complex IV, CIV), that cooperate to transfer electrons derived from NADH and succinate to molecular oxygen, creating an electrochemical gradient over the inner membrane that drives transmembrane transport and the ATP synthase. The cytochrome b-c1 complex catalyzes electron transfer from ubiquinol to cytochrome c, linking this redox reaction to translocation of protons across the mitochondrial inner membrane, with protons being carried across the membrane as hydrogens on the quinol. In the process called Q cycle, 2 protons are consumed from the matrix, 4 protons are released into the intermembrane space and 2 electrons are passed to cytochrome c. The chain is Cytochrome b-c1 complex subunit 9 (UQCR10) from Homo sapiens (Human).